The sequence spans 336 residues: Large ribosomal subunit protein uL3 (336 aa).

Disordered regions lie at residues 1–43 (MPQP…QGFA), 205–230 (ITKG…HARQ), and 311–336 (RPAV…SNQG). The segment covering 219-230 (GVQKRKGKHARQ) has biased composition (basic residues).

It belongs to the universal ribosomal protein uL3 family. In terms of assembly, part of the 50S ribosomal subunit. Forms a cluster with proteins L14 and L24e.

Functionally, one of the primary rRNA binding proteins, it binds directly near the 3'-end of the 23S rRNA, where it nucleates assembly of the 50S subunit. The chain is Large ribosomal subunit protein uL3 from Natronomonas pharaonis (strain ATCC 35678 / DSM 2160 / CIP 103997 / JCM 8858 / NBRC 14720 / NCIMB 2260 / Gabara) (Halobacterium pharaonis).